The chain runs to 531 residues: Arginine--tRNA ligase (531 aa).

Residues 113–123 (ANPTGPLHIGH) carry the 'HIGH' region motif.

This sequence belongs to the class-I aminoacyl-tRNA synthetase family. In terms of assembly, monomer.

It localises to the cytoplasm. The enzyme catalyses tRNA(Arg) + L-arginine + ATP = L-arginyl-tRNA(Arg) + AMP + diphosphate. This chain is Arginine--tRNA ligase, found in Campylobacter lari (strain RM2100 / D67 / ATCC BAA-1060).